We begin with the raw amino-acid sequence, 330 residues long: Lipoyl synthase (330 aa).

Cys-77, Cys-82, Cys-88, Cys-103, Cys-107, Cys-110, and Ser-317 together coordinate [4Fe-4S] cluster. Positions 89-306 (FNHGTATFMI…RSEAEKMGFE (218 aa)) constitute a Radical SAM core domain.

The protein belongs to the radical SAM superfamily. Lipoyl synthase family. The cofactor is [4Fe-4S] cluster.

It localises to the cytoplasm. It carries out the reaction [[Fe-S] cluster scaffold protein carrying a second [4Fe-4S](2+) cluster] + N(6)-octanoyl-L-lysyl-[protein] + 2 oxidized [2Fe-2S]-[ferredoxin] + 2 S-adenosyl-L-methionine + 4 H(+) = [[Fe-S] cluster scaffold protein] + N(6)-[(R)-dihydrolipoyl]-L-lysyl-[protein] + 4 Fe(3+) + 2 hydrogen sulfide + 2 5'-deoxyadenosine + 2 L-methionine + 2 reduced [2Fe-2S]-[ferredoxin]. It participates in protein modification; protein lipoylation via endogenous pathway; protein N(6)-(lipoyl)lysine from octanoyl-[acyl-carrier-protein]: step 2/2. In terms of biological role, catalyzes the radical-mediated insertion of two sulfur atoms into the C-6 and C-8 positions of the octanoyl moiety bound to the lipoyl domains of lipoate-dependent enzymes, thereby converting the octanoylated domains into lipoylated derivatives. The chain is Lipoyl synthase from Haemophilus ducreyi (strain 35000HP / ATCC 700724).